The primary structure comprises 191 residues: Ribosomal RNA small subunit methyltransferase G (191 aa).

S-adenosyl-L-methionine contacts are provided by residues glycine 62, leucine 67, 111 to 112, and arginine 124; that span reads IE.

The protein belongs to the methyltransferase superfamily. RNA methyltransferase RsmG family.

It localises to the cytoplasm. It catalyses the reaction guanosine(527) in 16S rRNA + S-adenosyl-L-methionine = N(7)-methylguanosine(527) in 16S rRNA + S-adenosyl-L-homocysteine. Specifically methylates the N7 position of guanine in position 527 of 16S rRNA. This Rickettsia rickettsii (strain Sheila Smith) protein is Ribosomal RNA small subunit methyltransferase G.